The sequence spans 153 residues: Endoribonuclease YbeY (153 aa).

The Zn(2+) site is built by histidine 116, histidine 120, and histidine 126.

This sequence belongs to the endoribonuclease YbeY family. The cofactor is Zn(2+).

It is found in the cytoplasm. In terms of biological role, single strand-specific metallo-endoribonuclease involved in late-stage 70S ribosome quality control and in maturation of the 3' terminus of the 16S rRNA. In Leifsonia xyli subsp. xyli (strain CTCB07), this protein is Endoribonuclease YbeY.